Reading from the N-terminus, the 134-residue chain is MSSEETKTFTRAEVAKHNTNKDTWLLIHNNIYDVTAFLNEHPGGEEVLIEQAGKDATENFEDVGHSNDARDMMKKYKIGELVESERTSVAQKSEPTWSTEQQTEESSVKSWLVPLVLCLVATLFYKFFFGGAKQ.

Residues 6–82 enclose the Cytochrome b5 heme-binding domain; it reads TKTFTRAEVA…MKKYKIGELV (77 aa). Residues His41 and His65 each contribute to the heme site. The tract at residues 86–105 is disordered; that stretch reads RTSVAQKSEPTWSTEQQTEE. Positions 87-105 are enriched in polar residues; that stretch reads TSVAQKSEPTWSTEQQTEE. The chain crosses the membrane as a helical span at residues 111 to 131; that stretch reads WLVPLVLCLVATLFYKFFFGG.

This sequence belongs to the cytochrome b5 family.

It is found in the endoplasmic reticulum membrane. The protein resides in the microsome membrane. Its function is as follows. Cytochrome b5 is a membrane-bound hemoprotein which functions as an electron carrier for several membrane-bound oxygenases. The protein is Cytochrome b5 (Cyt-b5) of Drosophila melanogaster (Fruit fly).